The primary structure comprises 379 residues: 1-deoxy-D-xylulose 5-phosphate reductoisomerase (379 aa).

Residues T10, G11, S12, I13, N39, and N121 each contribute to the NADPH site. K122 lines the 1-deoxy-D-xylulose 5-phosphate pocket. E123 serves as a coordination point for NADPH. A Mn(2+)-binding site is contributed by D147. The 1-deoxy-D-xylulose 5-phosphate site is built by S148, E149, S173, and H196. E149 contributes to the Mn(2+) binding site. Residue G202 coordinates NADPH. 4 residues coordinate 1-deoxy-D-xylulose 5-phosphate: S209, N214, K215, and E218. Mn(2+) is bound at residue E218.

The protein belongs to the DXR family. The cofactor is Mg(2+). Requires Mn(2+) as cofactor.

It carries out the reaction 2-C-methyl-D-erythritol 4-phosphate + NADP(+) = 1-deoxy-D-xylulose 5-phosphate + NADPH + H(+). It functions in the pathway isoprenoid biosynthesis; isopentenyl diphosphate biosynthesis via DXP pathway; isopentenyl diphosphate from 1-deoxy-D-xylulose 5-phosphate: step 1/6. Functionally, catalyzes the NADPH-dependent rearrangement and reduction of 1-deoxy-D-xylulose-5-phosphate (DXP) to 2-C-methyl-D-erythritol 4-phosphate (MEP). In Chlamydia felis (strain Fe/C-56) (Chlamydophila felis), this protein is 1-deoxy-D-xylulose 5-phosphate reductoisomerase.